The sequence spans 249 residues: Transcription initiation factor TFIID subunit 9B (249 aa).

Met-1 bears the N-acetylmethionine mark. Ser-147 is subject to Phosphoserine. The interval 148–171 is disordered; the sequence is AVSSRPTTPPVAPPQAVSGPNKAA. A Phosphothreonine modification is found at Thr-172. Ser-175 bears the Phosphoserine mark. Positions 224–234 are enriched in polar residues; sequence VSSQNTATDSN. The tract at residues 224–249 is disordered; the sequence is VSSQNTATDSNPLKRKHDDDDDNDTM.

This sequence belongs to the TAF9 family. In terms of assembly, binds TAF5 and TAF6. Component of TFIID and the TATA-binding protein-free TAF complex (TFTC). TFIID is composed of TATA binding protein (TBP) and a number of TBP-associated factors (TAFs). Binds N-terminal domain of p53/TP53 which is essential for transcription.

It localises to the nucleus. Functionally, essential for cell viability. TAF9 and TAF9B are involved in transcriptional activation as well as repression of distinct but overlapping sets of genes. May have a role in gene regulation associated with apoptosis. TAFs are components of the transcription factor IID (TFIID) complex, the TBP-free TAFII complex (TFTC), the PCAF histone acetylase complex and the STAGA transcription coactivator-HAT complex. TFIID or TFTC are essential for the regulation of RNA polymerase II-mediated transcription. The chain is Transcription initiation factor TFIID subunit 9B (Taf9b) from Mus musculus (Mouse).